Here is a 190-residue protein sequence, read N- to C-terminus: Transcription termination/antitermination protein NusG (190 aa).

The KOW domain occupies 141–165; sequence GDMVRVTSGPFADFSGVVSEVNAPQ.

The protein belongs to the NusG family.

In terms of biological role, participates in transcription elongation, termination and antitermination. The polypeptide is Transcription termination/antitermination protein NusG (Deinococcus radiodurans (strain ATCC 13939 / DSM 20539 / JCM 16871 / CCUG 27074 / LMG 4051 / NBRC 15346 / NCIMB 9279 / VKM B-1422 / R1)).